Here is a 193-residue protein sequence, read N- to C-terminus: Cysteine and glycine-rich protein 1 (193 aa).

An LIM zinc-binding 1 domain is found at 10 to 61; the sequence is CGVCQKTVYFAEEVQCEGSSFHKSCFLCLVCKKNLDSTTVAVHGEEIYCKSC. Positions 64 to 69 match the Nuclear localization signal motif; sequence KKYGPK. Phosphoserine is present on Ser81. Residues Lys84, Lys112, Lys131, Lys137, and Lys161 each carry the N6-acetyllysine modification. Residues 119 to 170 enclose the LIM zinc-binding 2 domain; it reads CPRCSQAVYAAEKVIGAGKSWHKSCFRCAKCGKGLESTTLADKDGEIYCKGC. Ser192 carries the phosphoserine modification.

Interacts with ASCC1; ASCC2 and TRIP4.

The protein resides in the nucleus. Could play a role in neuronal development. This Bos taurus (Bovine) protein is Cysteine and glycine-rich protein 1 (CSRP1).